Reading from the N-terminus, the 243-residue chain is Uridylate kinase (243 aa).

15-18 (KLSG) provides a ligand contact to ATP. UMP is bound at residue Gly-56. Positions 57 and 61 each coordinate ATP. 138-145 (TGNPYFST) is a binding site for UMP. 3 residues coordinate ATP: Asn-166, Tyr-172, and Asp-175.

Belongs to the UMP kinase family. As to quaternary structure, homohexamer.

It is found in the cytoplasm. It catalyses the reaction UMP + ATP = UDP + ADP. Its pathway is pyrimidine metabolism; CTP biosynthesis via de novo pathway; UDP from UMP (UMPK route): step 1/1. Inhibited by UTP. Functionally, catalyzes the reversible phosphorylation of UMP to UDP. This is Uridylate kinase from Mycoplasma genitalium (strain ATCC 33530 / DSM 19775 / NCTC 10195 / G37) (Mycoplasmoides genitalium).